Consider the following 177-residue polypeptide: Large ribosomal subunit protein uL6 (177 aa).

This sequence belongs to the universal ribosomal protein uL6 family. In terms of assembly, part of the 50S ribosomal subunit.

This protein binds to the 23S rRNA, and is important in its secondary structure. It is located near the subunit interface in the base of the L7/L12 stalk, and near the tRNA binding site of the peptidyltransferase center. This is Large ribosomal subunit protein uL6 from Salmonella dublin (strain CT_02021853).